The primary structure comprises 369 residues: Chaperone protein DnaJ (369 aa).

The region spanning 7 to 73 (DYYEILGVPR…QKRAMYDRFG (67 aa)) is the J domain. The CR-type zinc-finger motif lies at 143–225 (GAEIPVEYER…CGGSGRVLRK (83 aa)). Residues Cys156, Cys159, Cys173, Cys176, Cys199, Cys202, Cys213, and Cys216 each contribute to the Zn(2+) site. 4 CXXCXGXG motif repeats span residues 156-163 (CPRCGGTG), 173-180 (CPSCGGTG), 199-206 (CERCGGTG), and 213-220 (CHECGGSG).

Belongs to the DnaJ family. As to quaternary structure, homodimer. Zn(2+) is required as a cofactor.

Its subcellular location is the cytoplasm. In terms of biological role, participates actively in the response to hyperosmotic and heat shock by preventing the aggregation of stress-denatured proteins and by disaggregating proteins, also in an autonomous, DnaK-independent fashion. Unfolded proteins bind initially to DnaJ; upon interaction with the DnaJ-bound protein, DnaK hydrolyzes its bound ATP, resulting in the formation of a stable complex. GrpE releases ADP from DnaK; ATP binding to DnaK triggers the release of the substrate protein, thus completing the reaction cycle. Several rounds of ATP-dependent interactions between DnaJ, DnaK and GrpE are required for fully efficient folding. Also involved, together with DnaK and GrpE, in the DNA replication of plasmids through activation of initiation proteins. The protein is Chaperone protein DnaJ of Thermotoga maritima (strain ATCC 43589 / DSM 3109 / JCM 10099 / NBRC 100826 / MSB8).